The sequence spans 278 residues: HTH-type transcriptional activator RhaS (278 aa).

The HTH araC/xylS-type domain maps to 174-272 (NQLMAWLEEH…NWSPRDIRQG (99 aa)). 2 consecutive DNA-binding regions (H-T-H motif) follow at residues 191 to 212 (EAVA…KQHT) and 239 to 262 (VTEI…RREF).

In terms of assembly, binds DNA as a dimer.

Its subcellular location is the cytoplasm. Activates expression of the rhaBAD and rhaT operons. In Salmonella schwarzengrund (strain CVM19633), this protein is HTH-type transcriptional activator RhaS.